The chain runs to 49 residues: Splenin (49 aa).

In terms of domain architecture, LEM-like spans Leu-4–Leu-47. The segment at Arg-32–Tyr-36 is essential for biological activity.

Belongs to the thymopoietin family.

Functionally, hormone of the spleen with pleiotropic actions on prothymocytes, mature T-cells, the nicotinic acetylcholine receptor, and pituitary corticotrophs. The polypeptide is Splenin (SP) (Bos taurus (Bovine)).